The following is a 145-amino-acid chain: Lysozyme-like protein 4 (145 aa).

The N-terminal stretch at 1–19 is a signal peptide; it reads MKASVVLSLIGYLVVPSDT. In terms of domain architecture, C-type lysozyme spans 20–145; the sequence is AVLGRCVVAK…LARWLDGCKL (126 aa). Intrachain disulfides connect Cys-25-Cys-143, Cys-49-Cys-130, Cys-84-Cys-95, and Cys-91-Cys-109. Residue Glu-54 is part of the active site.

It belongs to the glycosyl hydrolase 22 family. As to quaternary structure, monomer.

It is found in the secreted. The protein localises to the cytoplasmic vesicle. It localises to the secretory vesicle. The protein resides in the acrosome. Its subcellular location is the cell projection. It is found in the cilium. The protein localises to the flagellum. In terms of biological role, may be involved in fertilization. Has no detectable bacteriolytic and lysozyme activities in vitro. The chain is Lysozyme-like protein 4 (LYZL4) from Bos taurus (Bovine).